The primary structure comprises 455 residues: 3-phosphoshikimate 1-carboxyvinyltransferase (455 aa).

Residues 1-19 (MSHGASSRPATARKSSGLS) are compositionally biased toward polar residues. Residues 1 to 25 (MSHGASSRPATARKSSGLSGTVRIP) are disordered. Lys-28 lines the phosphoenolpyruvate pocket. Positions 29 and 33 each coordinate 3-phosphoshikimate. Phosphoenolpyruvate is bound at residue Arg-128. Ser-173, Ala-174, Gln-175, Asp-326, and Lys-353 together coordinate 3-phosphoshikimate. Gln-175 lines the phosphoenolpyruvate pocket. Asp-326 acts as the Proton acceptor in catalysis. Residues Arg-357 and Arg-405 each contribute to the phosphoenolpyruvate site.

The protein belongs to the EPSP synthase family. Monomer.

Its subcellular location is the cytoplasm. It catalyses the reaction 3-phosphoshikimate + phosphoenolpyruvate = 5-O-(1-carboxyvinyl)-3-phosphoshikimate + phosphate. It functions in the pathway metabolic intermediate biosynthesis; chorismate biosynthesis; chorismate from D-erythrose 4-phosphate and phosphoenolpyruvate: step 6/7. Its activity is regulated as follows. Is resistant to inhibition by glyphosate (glyphosate-tolerant) like other members of class II EPSPS, in contrast to class I EPSPS, which is glyphosate-sensitive. Is much less sensitive to inhibition by the (R)-difluoromethyl and (R)-phosphonate analogs of the tetrahedral reaction intermediate than the representative class I EPSPS from E.coli. Is highly activated in the presence of cations, such as NH4(+), Rb(+), and K(+). Functionally, catalyzes the transfer of the enolpyruvyl moiety of phosphoenolpyruvate (PEP) to the 5-hydroxyl of shikimate-3-phosphate (S3P) to produce enolpyruvyl shikimate-3-phosphate and inorganic phosphate. This Agrobacterium sp. (strain CP4) protein is 3-phosphoshikimate 1-carboxyvinyltransferase.